Consider the following 488-residue polypeptide: UDP-N-acetylmuramate--L-alanine ligase (488 aa).

127-133 (GTHGKTT) contacts ATP.

This sequence belongs to the MurCDEF family.

Its subcellular location is the cytoplasm. It catalyses the reaction UDP-N-acetyl-alpha-D-muramate + L-alanine + ATP = UDP-N-acetyl-alpha-D-muramoyl-L-alanine + ADP + phosphate + H(+). It functions in the pathway cell wall biogenesis; peptidoglycan biosynthesis. In terms of biological role, cell wall formation. This Shewanella sp. (strain MR-4) protein is UDP-N-acetylmuramate--L-alanine ligase.